The primary structure comprises 36 residues: Photosystem I reaction center subunit VIII (36 aa).

Residues 7–29 (PSIFVPLVGLVFPAITMASLFIY) form a helical membrane-spanning segment.

Belongs to the PsaI family.

Its subcellular location is the plastid. It localises to the chloroplast thylakoid membrane. Functionally, may help in the organization of the PsaL subunit. This Psilotum nudum (Whisk fern) protein is Photosystem I reaction center subunit VIII.